We begin with the raw amino-acid sequence, 462 residues long: Protein phosphatase 1M (462 aa).

Residues 1–10 show a composition bias toward basic residues; it reads MSAGWFRRRF. Residues 1 to 66 are disordered; that stretch reads MSAGWFRRRF…PVRSPARGRT (66 aa). The PPM-type phosphatase domain occupies 100-452; sequence EFGIEEDQEW…DDVSVFVIPL (353 aa). Residues Asp-127 and Gly-128 each coordinate Mn(2+).

The protein belongs to the PP2C family. It depends on Mg(2+) as a cofactor. Requires Mn(2+) as cofactor. As to expression, widely expressed with highest levels in testis and lower levels in lung, kidney and brain.

The protein localises to the nucleus. The enzyme catalyses O-phospho-L-seryl-[protein] + H2O = L-seryl-[protein] + phosphate. The catalysed reaction is O-phospho-L-threonyl-[protein] + H2O = L-threonyl-[protein] + phosphate. This chain is Protein phosphatase 1M, found in Mus musculus (Mouse).